The sequence spans 70 residues: MPAIRVKENEPFEVAMRRFKRAVEKTGLLTELRAREAYEKPTTERKRKKAAAVKRLQKRLRSQQLPPKMY.

Belongs to the bacterial ribosomal protein bS21 family.

This is Small ribosomal subunit protein bS21 from Neisseria gonorrhoeae (strain ATCC 700825 / FA 1090).